The following is a 268-amino-acid chain: Tryptophan synthase alpha chain (268 aa).

Catalysis depends on proton acceptor residues glutamate 49 and aspartate 60.

The protein belongs to the TrpA family. In terms of assembly, tetramer of two alpha and two beta chains.

The enzyme catalyses (1S,2R)-1-C-(indol-3-yl)glycerol 3-phosphate + L-serine = D-glyceraldehyde 3-phosphate + L-tryptophan + H2O. It participates in amino-acid biosynthesis; L-tryptophan biosynthesis; L-tryptophan from chorismate: step 5/5. Functionally, the alpha subunit is responsible for the aldol cleavage of indoleglycerol phosphate to indole and glyceraldehyde 3-phosphate. The sequence is that of Tryptophan synthase alpha chain from Haemophilus influenzae (strain 86-028NP).